A 217-amino-acid polypeptide reads, in one-letter code: UPF0319 protein HS_1349 (217 aa).

The signal sequence occupies residues 1-21; the sequence is MKFSFAALASAMLLTSTAAFA.

The protein belongs to the UPF0319 family.

The protein is UPF0319 protein HS_1349 of Histophilus somni (strain 129Pt) (Haemophilus somnus).